The following is a 315-amino-acid chain: MTEQLPLALFLMGPTASGKTELAIRLRQRYPVELISVDSALIYKGMDIGTAKPDEREQQLAPHRLIDILDPTEAYSAADFRRDALAAMNEIVVQGKIPLLVGGTMLYFKALLEGLSPLPAANAEIRQQIEQEALTKGWSVLHDELQEIDPVSAARIHPNDPQRLSRALEVYRISGKTLTELTETKGESLPFRVKQFAIAPKERAELHRRIELRFDKMMEAGFEQEMRALYTRKDLHPDLPSIRCVGYRQMWDYLDGNCTLDEAIYRGICATRQLAKRQITWLRSWDNLTWLDSENIEQSLETLSEAIASDRDSCV.

Glycine 13–threonine 20 serves as a coordination point for ATP. Residue threonine 15 to threonine 20 participates in substrate binding. Interaction with substrate tRNA regions lie at residues aspartate 38–leucine 41, glutamine 162–arginine 166, arginine 243–arginine 248, and lysine 276–arginine 283.

The protein belongs to the IPP transferase family. As to quaternary structure, monomer. Requires Mg(2+) as cofactor.

It catalyses the reaction adenosine(37) in tRNA + dimethylallyl diphosphate = N(6)-dimethylallyladenosine(37) in tRNA + diphosphate. Catalyzes the transfer of a dimethylallyl group onto the adenine at position 37 in tRNAs that read codons beginning with uridine, leading to the formation of N6-(dimethylallyl)adenosine (i(6)A). The protein is tRNA dimethylallyltransferase of Vibrio vulnificus (strain YJ016).